Here is a 351-residue protein sequence, read N- to C-terminus: tRNA-splicing endonuclease (351 aa).

Active-site residues include Tyr-287, His-298, and Lys-329.

This sequence belongs to the tRNA-intron endonuclease family. Archaeal long subfamily. In terms of assembly, homodimer.

It carries out the reaction pretRNA = a 3'-half-tRNA molecule with a 5'-OH end + a 5'-half-tRNA molecule with a 2',3'-cyclic phosphate end + an intron with a 2',3'-cyclic phosphate and a 5'-hydroxyl terminus.. In terms of biological role, endonuclease that removes tRNA introns. Cleaves pre-tRNA at the 5'- and 3'-splice sites to release the intron. The products are an intron and two tRNA half-molecules bearing 2',3' cyclic phosphate and 5'-OH termini. Recognizes a pseudosymmetric substrate in which 2 bulged loops of 3 bases are separated by a stem of 4 bp. In Methanococcoides burtonii (strain DSM 6242 / NBRC 107633 / OCM 468 / ACE-M), this protein is tRNA-splicing endonuclease.